Consider the following 1397-residue polypeptide: MSGKPAARQGDMTQYGGSIVQGSAGVRIGAPTGVACSVCPGGVTSGHPVNPLLGAKVLPGETDIALPGPLPFILSRTYSSYRTKTPAPVGSLGPGWKMPADIRLQLRDNTLILSDNGGRSLYFEHLFPGEDGYSRSESLWLVRGGVAKLDEGHRLAALWQALPEELRLSPHRYLATNSPQGPWWLLGWCERVPEADEVLPAPLPPYRVLTGLVDRFGRTQTFHREAAGEFSGEITGVTDGAGRHFRLVLTTQAQRAEEARQQAISGGTEPSAFPDTLPGYTEYGRDNGIRLSAVWLTHDPEYPENLPAAPLVRYGWTPRGELAAVYDRSNTQVRSFTYDDKYRGRMVAHRHTGRPEICYRYDSDGRVTEQLNPAGLSYTYQYEKDRITITDSLNRREVLHTQGEGGLKRVVKKEHADGSVTQSQFDAVGRLRAQTDAAGRTTEYSPDVVTGLITRITTPDGRASAFYYNHHSQLTSATGPDGLEIRREYDEWGRLIQETAPDGDITRYRYDNPHSDLPCATEDATGSRKTMTWSRYGQLLSFTDCSGYVTRYDHDRFGQVTAVHREEGLSQYRAYDSRGQLIAVKDTQGHETRYEYNAAGDLTTVIAPDGSRNGTQYDAWGKAICTTQGGLTRSMEYDAAGRVIRLTSENGSHTTFRYDVLDRLIQETGFDGRTQRYHHDLTGKLIRSEDEGLVTHWHYDEADRLTHRTVNGETAERWQYDERGWLTDISHISEGHRVTVHYGYDSKGRLASEHLTVHHPQTNELLWQHETRHAYNAQGLANRCIPDSLPAVEWLTYGSGWLSGMKLGDTPLVEYTRDRLHRETLRSFGRYELTTAYTPAGQLQSQHLNSLLSDRDYTWNDNGELIRISSPRQTRSYSYSTTGRLTGVHTTAANLDIRIPYTTDPAGNRLPDPELHPDSALSMWPDNRIARDAHYLYRYDRHGRLTEKTDLIPEGVIRTDDERTHRYHYDSQHRLVHYTRTQYAEPLVESRYLYDPLGRRVAKRVWRRERDLTGWMSLSRKPQVTWYGWDGDRLTTIQNDRTRIQTIYQPGSFTPLIRVETATGELAKTQRRSLADTLQQSGGEDGGSVVFPPVLVQMLDRLESEILADRVSEESRRWLASCGLTVAQMQSQMDPVYTPARKIHLYHCDHRGLPLALISTEGTTAWYAEYDEWGNLLNEENPHQLQQLIRLPGQQYDEESGLYYNRHRYYDPLQGRYITQDPIGLKGGWNFYQYPLNPISNIDPLGLETLKCIKPLHSMGGTGERSGPDIWGNPFYHQYLCVPDGKGDYTCGGQDQRGESKGDGLWGPGKASNDTKEAAGRCDLVETDNSCVENCLKGKFKEVRPRYSVLPDIFTPINLGLFKNCQDWSNDSLETCKMKCSGNNIGRFIRFVFTGVM.

28 repeat units span residues 330-352 (NTQVRSFTYDDKYRGRMVAHRHT), 353-374 (GRPEICYRYDSDGRVTEQLNPA), 375-417 (GLSY…EHAD), 418-438 (GSVTQSQFDAVGRLRAQTDAA), 439-460 (GRTTEYSPDVVTGLITRITTPD), 461-481 (GRASAFYYNHHSQLTSATGPD), 482-502 (GLEIRREYDEWGRLIQETAPD), 503-525 (GDITRYRYDNPHSDLPCATEDAT), 526-546 (GSRKTMTWSRYGQLLSFTDCS), 547-567 (GYVTRYDHDRFGQVTAVHREE), 568-588 (GLSQYRAYDSRGQLIAVKDTQ), 589-609 (GHETRYEYNAAGDLTTVIAPD), 610-629 (GSRNGTQYDAWGKAICTTQG), 630-650 (GLTRSMEYDAAGRVIRLTSEN), 651-671 (GSHTTFRYDVLDRLIQETGFD), 672-691 (GRTQRYHHDLTGKLIRSEDE), 692-711 (GLVTHWHYDEADRLTHRTVN), 712-734 (GETAERWQYDERGWLTDISHISE), 735-758 (GHRVTVHYGYDSKGRLASEHLTVH), 808-828 (GDTPLVEYTRDRLHRETLRSF), 829-850 (GRYELTTAYTPAGQLQSQHLNS), 851-871 (LLSDRDYTWNDNGELIRISSP), 872-894 (RQTRSYSYSTTGRLTGVHTTAAN), 895-930 (LDIRIPYTTDPAGNRLPDPELHPDSALSMWPDNRIA), 931-959 (RDAHYLYRYDRHGRLTEKTDLIPEGVIRT), 960-984 (DDERTHRYHYDSQHRLVHYTRTQYA), 985-1019 (EPLVESRYLYDPLGRRVAKRVWRRERDLTGWMSLS), and 1162-1186 (GTTAWYAEYDEWGNLLNEENPHQLQ). Residues 330–1186 (NTQVRSFTYD…LNEENPHQLQ (857 aa)) are 28 X approximate tandem repeats. Residues 1292–1312 (GGQDQRGESKGDGLWGPGKAS) form a disordered region.

Belongs to the RHS family.

Rhs elements have a nonessential function. They may play an important role in the natural ecology of the cell. This is Protein RhsC (rhsC) from Escherichia coli (strain K12).